A 355-amino-acid polypeptide reads, in one-letter code: Phosphoserine aminotransferase (355 aa).

Residue Arg-41 coordinates L-glutamate. Pyridoxal 5'-phosphate contacts are provided by residues 75-76 (AS), Trp-99, Thr-147, Asp-166, and Gln-189. Lys-190 carries the post-translational modification N6-(pyridoxal phosphate)lysine. 231–232 (NT) provides a ligand contact to pyridoxal 5'-phosphate.

This sequence belongs to the class-V pyridoxal-phosphate-dependent aminotransferase family. SerC subfamily. In terms of assembly, homodimer. The cofactor is pyridoxal 5'-phosphate.

Its subcellular location is the cytoplasm. It carries out the reaction O-phospho-L-serine + 2-oxoglutarate = 3-phosphooxypyruvate + L-glutamate. It catalyses the reaction 4-(phosphooxy)-L-threonine + 2-oxoglutarate = (R)-3-hydroxy-2-oxo-4-phosphooxybutanoate + L-glutamate. It functions in the pathway amino-acid biosynthesis; L-serine biosynthesis; L-serine from 3-phospho-D-glycerate: step 2/3. The protein operates within cofactor biosynthesis; pyridoxine 5'-phosphate biosynthesis; pyridoxine 5'-phosphate from D-erythrose 4-phosphate: step 3/5. Its function is as follows. Catalyzes the reversible conversion of 3-phosphohydroxypyruvate to phosphoserine and of 3-hydroxy-2-oxo-4-phosphonooxybutanoate to phosphohydroxythreonine. The protein is Phosphoserine aminotransferase of Bacteroides fragilis (strain ATCC 25285 / DSM 2151 / CCUG 4856 / JCM 11019 / LMG 10263 / NCTC 9343 / Onslow / VPI 2553 / EN-2).